Consider the following 193-residue polypeptide: Ion-translocating oxidoreductase complex subunit B (193 aa).

The hydrophobic stretch occupies residues 1–26 (MSTMLIAVILLTLLALFFGVLLGFAA). The 4Fe-4S domain occupies 32 to 90 (EGNPIVDELEAILPQTQCGQCGYPGCRPYAEAIANGDKVNKCPPGGTATMEKLANLMGV). Residues C49, C52, C57, C73, C114, C117, C120, C124, C144, C147, C150, and C154 each contribute to the [4Fe-4S] cluster site. 2 consecutive 4Fe-4S ferredoxin-type domains span residues 105–134 (KVAY…GAGK) and 136–164 (MHTV…MIPV).

It belongs to the 4Fe4S bacterial-type ferredoxin family. RnfB subfamily. As to quaternary structure, the complex is composed of six subunits: RnfA, RnfB, RnfC, RnfD, RnfE and RnfG. [4Fe-4S] cluster is required as a cofactor.

It localises to the cell inner membrane. Part of a membrane-bound complex that couples electron transfer with translocation of ions across the membrane. In Shewanella sp. (strain ANA-3), this protein is Ion-translocating oxidoreductase complex subunit B.